A 268-amino-acid polypeptide reads, in one-letter code: HTH-type transcriptional activator RhaS (268 aa).

The HTH araC/xylS-type domain occupies 171-268 (RQMIRWLENN…YSIAPRELRI (98 aa)). 2 consecutive DNA-binding regions (H-T-H motif) follow at residues 188-209 (EELA…KSQT) and 236-259 (IINI…KNEY).

In terms of assembly, binds DNA as a dimer.

The protein resides in the cytoplasm. Its function is as follows. Activates expression of the rhaBAD and rhaT operons. The chain is HTH-type transcriptional activator RhaS from Mannheimia succiniciproducens (strain KCTC 0769BP / MBEL55E).